The sequence spans 362 residues: Mannose-1-phosphate guanyltransferase (362 aa).

This sequence belongs to the transferase hexapeptide repeat family.

The protein localises to the cytoplasm. The catalysed reaction is alpha-D-mannose 1-phosphate + GTP + H(+) = GDP-alpha-D-mannose + diphosphate. The protein operates within nucleotide-sugar biosynthesis; GDP-alpha-D-mannose biosynthesis; GDP-alpha-D-mannose from alpha-D-mannose 1-phosphate (GTP route): step 1/1. Involved in cell wall synthesis where it is required for glycosylation. Involved in cell cycle progression through cell-size checkpoint. The polypeptide is Mannose-1-phosphate guanyltransferase (MPG1) (Debaryomyces hansenii (strain ATCC 36239 / CBS 767 / BCRC 21394 / JCM 1990 / NBRC 0083 / IGC 2968) (Yeast)).